Reading from the N-terminus, the 180-residue chain is Acireductone dioxygenase (180 aa).

Fe(2+)-binding residues include His-97, His-99, Glu-103, and His-141. Residues His-97, His-99, Glu-103, and His-141 each contribute to the Ni(2+) site.

It belongs to the acireductone dioxygenase (ARD) family. In terms of assembly, monomer. The cofactor is Fe(2+). It depends on Ni(2+) as a cofactor.

It carries out the reaction 1,2-dihydroxy-5-(methylsulfanyl)pent-1-en-3-one + O2 = 3-(methylsulfanyl)propanoate + CO + formate + 2 H(+). It catalyses the reaction 1,2-dihydroxy-5-(methylsulfanyl)pent-1-en-3-one + O2 = 4-methylsulfanyl-2-oxobutanoate + formate + 2 H(+). It participates in amino-acid biosynthesis; L-methionine biosynthesis via salvage pathway; L-methionine from S-methyl-5-thio-alpha-D-ribose 1-phosphate: step 5/6. Functionally, catalyzes 2 different reactions between oxygen and the acireductone 1,2-dihydroxy-3-keto-5-methylthiopentene (DHK-MTPene) depending upon the metal bound in the active site. Fe-containing acireductone dioxygenase (Fe-ARD) produces formate and 2-keto-4-methylthiobutyrate (KMTB), the alpha-ketoacid precursor of methionine in the methionine recycle pathway. Ni-containing acireductone dioxygenase (Ni-ARD) produces methylthiopropionate, carbon monoxide and formate, and does not lie on the methionine recycle pathway. This Cronobacter sakazakii (strain ATCC BAA-894) (Enterobacter sakazakii) protein is Acireductone dioxygenase.